A 256-amino-acid chain; its full sequence is MLRIADKTFDSHLFTGTGKFASSQLMVEAIRASGSQLVTLAMKRVDLRQHNDAILEPLIAAGVTLLPNTSGAKTAEEAIFAAHLAREALGTNWLKLEIHPDARWLLPDPIETLKAAEMLVQQGFVVLPYCGADPVLCKRLEEVGCAAVMPLGAPIGSNQGLETRAMLEIIIQQATVPVVVDAGIGVPSHAAQALEMGADAVLVNTAIAVADDPVNMAKAFRLAVEAGLLARQSGPGSRSHFAHATSPLTGFLEASA.

Catalysis depends on K95, which acts as the Schiff-base intermediate with DXP. Residues G156, 182 to 183 (AG), and 204 to 205 (NT) contribute to the 1-deoxy-D-xylulose 5-phosphate site.

Belongs to the ThiG family. As to quaternary structure, homotetramer. Forms heterodimers with either ThiH or ThiS.

Its subcellular location is the cytoplasm. The enzyme catalyses [ThiS sulfur-carrier protein]-C-terminal-Gly-aminoethanethioate + 2-iminoacetate + 1-deoxy-D-xylulose 5-phosphate = [ThiS sulfur-carrier protein]-C-terminal Gly-Gly + 2-[(2R,5Z)-2-carboxy-4-methylthiazol-5(2H)-ylidene]ethyl phosphate + 2 H2O + H(+). Its pathway is cofactor biosynthesis; thiamine diphosphate biosynthesis. In terms of biological role, catalyzes the rearrangement of 1-deoxy-D-xylulose 5-phosphate (DXP) to produce the thiazole phosphate moiety of thiamine. Sulfur is provided by the thiocarboxylate moiety of the carrier protein ThiS. In vitro, sulfur can be provided by H(2)S. The protein is Thiazole synthase of Shigella boydii serotype 18 (strain CDC 3083-94 / BS512).